Here is a 39-residue protein sequence, read N- to C-terminus: Antimicrobial peptide CHP1 (39 aa).

Cystine bridges form between Cys-6/Cys-28, Cys-13/Cys-34, and Cys-18/Cys-35.

Its function is as follows. Bactericidal activity; inhibits S.aureus and E.coli. In Gallus gallus (Chicken), this protein is Antimicrobial peptide CHP1.